A 692-amino-acid polypeptide reads, in one-letter code: DNA ligase (692 aa).

Residues 34–38, 83–84, and Glu-124 each bind NAD(+); these read DAEYD and SL. Lys-126 functions as the N6-AMP-lysine intermediate in the catalytic mechanism. The NAD(+) site is built by Arg-147, Glu-193, Lys-310, and Lys-334. Zn(2+)-binding residues include Cys-428, Cys-431, Cys-446, and Cys-452. A BRCT domain is found at 612-692; that stretch reads AGVAGVSGKT…ALLALLAGNA (81 aa).

This sequence belongs to the NAD-dependent DNA ligase family. LigA subfamily. Mg(2+) is required as a cofactor. It depends on Mn(2+) as a cofactor.

The catalysed reaction is NAD(+) + (deoxyribonucleotide)n-3'-hydroxyl + 5'-phospho-(deoxyribonucleotide)m = (deoxyribonucleotide)n+m + AMP + beta-nicotinamide D-nucleotide.. Its function is as follows. DNA ligase that catalyzes the formation of phosphodiester linkages between 5'-phosphoryl and 3'-hydroxyl groups in double-stranded DNA using NAD as a coenzyme and as the energy source for the reaction. It is essential for DNA replication and repair of damaged DNA. This is DNA ligase from Laribacter hongkongensis (strain HLHK9).